The sequence spans 736 residues: ABC transporter G family member 16 (736 aa).

Positions 88-332 constitute an ABC transporter domain; the sequence is LDFHDLVPWR…FAGFGNPIPE (245 aa). 125-132 contributes to the ATP binding site; that stretch reads GASGSGKS. 7 helical membrane-spanning segments follow: residues 410-430, 449-469, 484-504, 525-545, 569-589, 590-610, and 709-729; these read SVINHGGGTLAVPAFANPFWI, LLGMRLATVIVTGFILATVFW, FFAFAMSTMFYTCADALPVFL, VLSHAIVTFPSLIFLSLAFAV, ASFWSGSSFVTFLSGVVPHVM, LGYTIVVAILAYFLLFSGFFI, and LLITVGFGFLFRILFYLCLLL. Positions 430 to 640 constitute an ABC transmembrane type-2 domain; the sequence is IEIKTLTRRS…PYEAVLQNEF (211 aa).

The protein belongs to the ABC transporter superfamily. ABCG family. Eye pigment precursor importer (TC 3.A.1.204) subfamily.

Its subcellular location is the membrane. The polypeptide is ABC transporter G family member 16 (ABCG16) (Arabidopsis thaliana (Mouse-ear cress)).